The chain runs to 278 residues: Thiazole synthase (278 aa).

The active-site Schiff-base intermediate with DXP is the Lys-109. Residues Gly-170, 197–198 (AG), and 219–220 (NT) each bind 1-deoxy-D-xylulose 5-phosphate.

Belongs to the ThiG family. Homotetramer. Forms heterodimers with either ThiH or ThiS.

Its subcellular location is the cytoplasm. The catalysed reaction is [ThiS sulfur-carrier protein]-C-terminal-Gly-aminoethanethioate + 2-iminoacetate + 1-deoxy-D-xylulose 5-phosphate = [ThiS sulfur-carrier protein]-C-terminal Gly-Gly + 2-[(2R,5Z)-2-carboxy-4-methylthiazol-5(2H)-ylidene]ethyl phosphate + 2 H2O + H(+). It participates in cofactor biosynthesis; thiamine diphosphate biosynthesis. Functionally, catalyzes the rearrangement of 1-deoxy-D-xylulose 5-phosphate (DXP) to produce the thiazole phosphate moiety of thiamine. Sulfur is provided by the thiocarboxylate moiety of the carrier protein ThiS. In vitro, sulfur can be provided by H(2)S. This Cupriavidus necator (strain ATCC 17699 / DSM 428 / KCTC 22496 / NCIMB 10442 / H16 / Stanier 337) (Ralstonia eutropha) protein is Thiazole synthase.